Consider the following 394-residue polypeptide: Elongation factor Tu (394 aa).

One can recognise a tr-type G domain in the interval 10 to 204; the sequence is KAHVNIGTIG…SVDSYIPTPT (195 aa). Residues 19–26 are G1; it reads GHIDHGKT. Residue 19 to 26 coordinates GTP; the sequence is GHIDHGKT. T26 contributes to the Mg(2+) binding site. The tract at residues 60–64 is G2; sequence GITIN. The tract at residues 81–84 is G3; it reads DCPG. GTP is bound by residues 81 to 85 and 136 to 139; these read DCPGH and NKCD. A G4 region spans residues 136 to 139; that stretch reads NKCD. A G5 region spans residues 174–176; that stretch reads SAL.

It belongs to the TRAFAC class translation factor GTPase superfamily. Classic translation factor GTPase family. EF-Tu/EF-1A subfamily. In terms of assembly, monomer.

The protein localises to the cytoplasm. The enzyme catalyses GTP + H2O = GDP + phosphate + H(+). GTP hydrolase that promotes the GTP-dependent binding of aminoacyl-tRNA to the A-site of ribosomes during protein biosynthesis. This is Elongation factor Tu from Malacoplasma penetrans (strain HF-2) (Mycoplasma penetrans).